Reading from the N-terminus, the 198-residue chain is Ribosome maturation factor RimM (198 aa).

The tract at residues 1–21 (MPPPTASTPDDSADPGPDFAD) is disordered. Positions 122–195 (DDELFADDLV…RIVVRPIDGL (74 aa)) constitute a PRC barrel domain.

It belongs to the RimM family. As to quaternary structure, binds ribosomal protein uS19.

It is found in the cytoplasm. In terms of biological role, an accessory protein needed during the final step in the assembly of 30S ribosomal subunit, possibly for assembly of the head region. Essential for efficient processing of 16S rRNA. May be needed both before and after RbfA during the maturation of 16S rRNA. It has affinity for free ribosomal 30S subunits but not for 70S ribosomes. The chain is Ribosome maturation factor RimM from Salinibacter ruber (strain DSM 13855 / M31).